A 459-amino-acid polypeptide reads, in one-letter code: Protein BTN1 (459 aa).

A run of 11 helical transmembrane segments spans residues 37-57 (VSVV…YVLV), 73-93 (AVLL…PYFI), 102-122 (IAVF…APVE), 129-149 (LLGV…FLGL), 167-187 (GAGL…GLGV), 189-209 (GSLL…WGIL), 240-260 (VPAG…AATA), 283-303 (ALFF…YTIN), 325-342 (YYPF…ISRS), 352-372 (LYLP…HAVL), and 374-394 (FIPS…LGGA).

Belongs to the battenin family.

The protein localises to the vacuole membrane. Its function is as follows. Involved in vacuolar transport and vacuole pH homeostasis. Also required for cytokinesis. This is Protein BTN1 (BTN1) from Chaetomium globosum (strain ATCC 6205 / CBS 148.51 / DSM 1962 / NBRC 6347 / NRRL 1970) (Soil fungus).